Consider the following 158-residue polypeptide: Protein Smg homolog (158 aa).

This sequence belongs to the Smg family.

The protein is Protein Smg homolog of Shewanella sp. (strain ANA-3).